We begin with the raw amino-acid sequence, 625 residues long: Probable potassium transport system protein Kup (625 aa).

Helical transmembrane passes span 13–33, 53–73, 103–123, 141–161, 172–192, 206–226, 250–270, 282–302, 340–360, 369–389, 400–420, and 422–442; these read TALAALGVVFGDIGTSPLYAL, ILSIIFWCLMLIISIKYVAIV, IYMIAIGFIGASLFFGDGIIT, VFDPFIMPIAIAIIVTLFLVQ, FGPITLVWFLSLGILGIHSVI, AIQFIYHHPIMTFFVMGAVVL, WFFVVLPCLVLNYAGQGALLL, LLVPQWALYPMIIMATMATVI, IYVPFLNWLLLIAIIILILIF, AYGLAVTLTMLCDTILVAVFI, VLLLIIPFFILESVLVGATSL, and ILSGGWVPLLIGAIAVTILMT.

Belongs to the HAK/KUP transporter (TC 2.A.72) family.

The protein localises to the cell inner membrane. The enzyme catalyses K(+)(in) + H(+)(in) = K(+)(out) + H(+)(out). Its function is as follows. Transport of potassium into the cell. Likely operates as a K(+):H(+) symporter. The sequence is that of Probable potassium transport system protein Kup from Acinetobacter baumannii (strain ACICU).